The primary structure comprises 336 residues: Phospho-N-acetylmuramoyl-pentapeptide-transferase (336 aa).

10 consecutive transmembrane segments (helical) span residues L3–I23, G53–I73, S78–L98, L118–I138, V143–V163, G174–A194, F200–N220, V226–A246, W251–V271, and A316–F336.

This sequence belongs to the glycosyltransferase 4 family. MraY subfamily. Mg(2+) is required as a cofactor.

Its subcellular location is the cell membrane. It carries out the reaction UDP-N-acetyl-alpha-D-muramoyl-L-alanyl-gamma-D-glutamyl-L-lysyl-D-alanyl-D-alanine + di-trans,octa-cis-undecaprenyl phosphate = Mur2Ac(oyl-L-Ala-gamma-D-Glu-L-Lys-D-Ala-D-Ala)-di-trans,octa-cis-undecaprenyl diphosphate + UMP. It participates in cell wall biogenesis; peptidoglycan biosynthesis. Catalyzes the initial step of the lipid cycle reactions in the biosynthesis of the cell wall peptidoglycan: transfers peptidoglycan precursor phospho-MurNAc-pentapeptide from UDP-MurNAc-pentapeptide onto the lipid carrier undecaprenyl phosphate, yielding undecaprenyl-pyrophosphoryl-MurNAc-pentapeptide, known as lipid I. The sequence is that of Phospho-N-acetylmuramoyl-pentapeptide-transferase from Streptococcus pyogenes serotype M6 (strain ATCC BAA-946 / MGAS10394).